The primary structure comprises 205 residues: Inactive ribonuclease-like protein 9 (205 aa).

Residues 1–26 (MMRTLITTHPLPLLLLPQQLLQPVQF) form the signal peptide. Intrachain disulfides connect cysteine 98–cysteine 153, cysteine 116–cysteine 168, and cysteine 123–cysteine 130. 2 N-linked (GlcNAc...) asparagine glycosylation sites follow: asparagine 131 and asparagine 143.

It belongs to the pancreatic ribonuclease family.

The protein resides in the secreted. In terms of biological role, does not exhibit any ribonuclease activity. The polypeptide is Inactive ribonuclease-like protein 9 (RNASE9) (Pan troglodytes (Chimpanzee)).